We begin with the raw amino-acid sequence, 1332 residues long: Elongator complex protein 1 (1332 aa).

Ser471, Ser804, Ser867, Ser1171, and Ser1174 each carry phosphoserine. Residues 885–1332 (VDVNELYDHS…RTQWKLSLLD (448 aa)) form a mediates dimerization region. Positions 1150-1208 (QAGLDDEVPHGQESDLFSETSSVVSGSEMSGKYSHSNSRISARSSKNRRKAERKKHSLK) are disordered. Positions 1164–1177 (DLFSETSSVVSGSE) are enriched in polar residues. The tract at residues 1191-1209 (ARSSKNRRKAERKKHSLKE) is required for binding to tRNA. Positions 1194-1206 (SKNRRKAERKKHS) are enriched in basic residues.

This sequence belongs to the ELP1/IKA1 family. In terms of assembly, homodimer; dimerization promotes ELP1 stability and elongator complex formation. Component of the elongator complex which consists of ELP1, ELP2, ELP3, ELP4, ELP5 and ELP6. Interacts preferentially with MAP3K14/NIK followed by IKK-alpha and IKK-beta.

It is found in the cytoplasm. It localises to the nucleus. It functions in the pathway tRNA modification; 5-methoxycarbonylmethyl-2-thiouridine-tRNA biosynthesis. Component of the elongator complex which is required for multiple tRNA modifications, including mcm5U (5-methoxycarbonylmethyl uridine), mcm5s2U (5-methoxycarbonylmethyl-2-thiouridine), and ncm5U (5-carbamoylmethyl uridine). The elongator complex catalyzes the formation of carboxymethyluridine in the wobble base at position 34 in tRNAs. Regulates the migration and branching of projection neurons in the developing cerebral cortex, through a process depending on alpha-tubulin acetylation. ELP1 binds to tRNA, mediating interaction of the elongator complex with tRNA. May act as a scaffold protein that assembles active IKK-MAP3K14 complexes (IKKA, IKKB and MAP3K14/NIK). This Homo sapiens (Human) protein is Elongator complex protein 1.